Reading from the N-terminus, the 102-residue chain is Parathymosin (102 aa).

The disordered stretch occupies residues 1-102 (MSEKSVEAAA…RQKTENGASA (102 aa)). Ser2 carries the post-translational modification N-acetylserine. A Phosphoserine modification is found at Ser2. Position 4 is an N6-acetyllysine (Lys4). Phosphoserine is present on residues Ser5 and Ser13. The span at 13–37 (SAKDLKEKKEKVEEKAGRKERKKEV) shows a compositional bias: basic and acidic residues. At Lys15 the chain carries N6-acetyllysine. The segment covering 38–76 (VEEEENGAEEEEEETAEDGEEEDDGDEEDEEEEEEEDEG) has biased composition (acidic residues). Position 52 is a phosphothreonine (Thr52). Lys92 is modified (N6-acetyllysine).

Belongs to the pro/parathymosin family.

Functionally, parathymosin may mediate immune function by blocking the effect of prothymosin alpha which confers resistance to certain opportunistic infections. The chain is Parathymosin (PTMS) from Bos taurus (Bovine).